A 547-amino-acid polypeptide reads, in one-letter code: Zinc metalloproteinase-disintegrin-like BjussuMP-1 (547 aa).

Positions 1-133 (EFKVNGEPVV…KKASKLVVTA (133 aa)) are excised as a propeptide. Residues 141-337 (RYVEIVVVVD…HNPQCILNEP (197 aa)) enclose the Peptidase M12B domain. Ca(2+) is bound by residues E144 and D228. 3 cysteine pairs are disulfide-bonded: C252–C332, C292–C316, and C294–C299. H277 lines the Zn(2+) pocket. The active site involves E278. H281 and H287 together coordinate Zn(2+). The Ca(2+) site is built by C332, N335, V341, N344, L346, E348, E351, and D354. A Disintegrin domain is found at 339-421 (LTVSGNELLE…DCPRNRFHRN (83 aa)). 11 disulfides stabilise this stretch: C353–C363, C362–C385, C376–C382, C381–C406, C394–C413, C425–C437, C444–C494, C459–C501, C472–C482, C489–C526, and C520–C531. An N-linked (GlcNAc...) asparagine glycan is attached at N451. N-linked (GlcNAc...) asparagine glycosylation is present at N504.

The protein belongs to the venom metalloproteinase (M12B) family. P-III subfamily. P-IIIa sub-subfamily. In terms of assembly, monomer. It depends on Zn(2+) as a cofactor. In terms of tissue distribution, expressed by the venom gland.

The protein localises to the secreted. With respect to regulation, completely inhibited by EDTA, EGTA, 1,10-phenanthroline, and partially by beta-mercaptoethanol. Is not inhibited by aprotinin and leupeptin. Its function is as follows. This protein is a zinc metalloprotease from snake venom that causes hemorrhage in mice after intradermal injection. It inhibits platelet aggregation induced by collagen and ADP. Has moderate edema activity, but no myotoxic activity. It hydrolyzes the Aalpha-chain and more slowly the Bbeta-chain of fibrinogen, without affecting the gamma-chains. It also shows proteolytic activity on casein. It is unable to clot plasma. It also shows bactericidal activity against E.coli and S.aureus. The sequence is that of Zinc metalloproteinase-disintegrin-like BjussuMP-1 from Bothrops jararacussu (Jararacussu).